A 167-amino-acid polypeptide reads, in one-letter code: MSKEIIAKKAAIVEEVFEKFQSASSVVVVDYRGLTVEEVTDLRKQLREAGVEMRVIKNTFLKRAADKAGYEGLDDTFSGPTAVAFGGEDITAPARIMAKFAEDHEALEIKGGMIEGKIASLEEINALAKLPNRDGLLSMLLSVLQAPVRNFAYAVKAVADSKDEDAA.

It belongs to the universal ribosomal protein uL10 family. In terms of assembly, part of the ribosomal stalk of the 50S ribosomal subunit. The N-terminus interacts with L11 and the large rRNA to form the base of the stalk. The C-terminus forms an elongated spine to which L12 dimers bind in a sequential fashion forming a multimeric L10(L12)X complex.

Its function is as follows. Forms part of the ribosomal stalk, playing a central role in the interaction of the ribosome with GTP-bound translation factors. The polypeptide is Large ribosomal subunit protein uL10 (Ligilactobacillus salivarius (strain UCC118) (Lactobacillus salivarius)).